Here is a 196-residue protein sequence, read N- to C-terminus: Calcineurin B homologous protein 2 (196 aa).

A lipid anchor (N-myristoyl glycine) is attached at Gly-2. EF-hand domains lie at 26–61 (ASLLRLYHRFQALDRDEKGFLSRLDLQQIGALAVNP), 71–106 (FPNGSQRLYFAGFARVLAYFRPIDEEDATLRDPKQP), 111–146 (SRMNKLRFAFQLYDLDRDGKISRNEMLQVLRLMVGV), and 152–187 (QLESITDRTVQEADEDGDGAVSFLEFTKSLEKMNIE). Phosphoserine is present on Ser-27. Ca(2+)-binding residues include Asp-124, Asp-126, Asp-128, Lys-130, and Glu-135. The Nuclear export signal motif lies at 137–148 (LQVLRLMVGVQV). Ca(2+) is bound by residues Asp-165, Asp-167, Asp-169, and Glu-176.

This sequence belongs to the calcineurin regulatory subunit family. CHP subfamily. As to quaternary structure, interacts with PPP3CA. Interacts with SLC9A1/NHE1; the interaction occurs in a calcium-dependent manner. Interacts with SLC9A1/NHE1.

The protein resides in the cytoplasm. It is found in the nucleus. The protein localises to the cell membrane. Functions as an integral cofactor in cell pH regulation by controlling plasma membrane-type Na(+)/H(+) exchange activity. Binds to and activates SLC9A1/NHE1 in a serum-independent manner, thus increasing pH and protecting cells from serum deprivation-induced death. Also plays a role in the regulation of cell proliferation and tumor growth by increasing the phosphatase activity of PPP3CA in a calcium-dependent manner. Activator of the calcineurin/NFAT signaling pathway. Involved in the cytoplasmic translocation of the transcription factor NFATC3 to the nucleus. The sequence is that of Calcineurin B homologous protein 2 (Chp2) from Mus musculus (Mouse).